Reading from the N-terminus, the 421-residue chain is MGDRFIPIRNVSNEFNFSFQSFKECVLSHGSNLRRKTSGTIQRQFMELLSMELFGSQASRSRAFYYGEDKRKIEKKMLDTPDRKSYSLSPISPQSQDMLRQPQKPKRAFPKTPYKILDAPYLKNDFYLNLLDWGQSNVLAVGLASSIYLWSAASGKVVQLHDFGATNHVTSVLWTGKGTQLAVGTDSGVIYIWDIESTKSVRSLKGHSERVAALAWNDNTLTSGGKDEVILHHDLRAPGCCAEMMKVHEQEICGLQWDRSLGQLASGGNDNNLFVWDYRSSRPLHKFEEHTAAVKAIGWSPHQRGILASGGGTIDRCLTIHNTLTGRLQNKLDTGSQVCNMAWSKTSNEIVTTHGFAKNQVSLWKYPSLKNIANLTAHTNRVLYLSMSPDGQSIVTGAGDETLRFWKLFNKKPKEESTLIR.

The disordered stretch occupies residues 79–107; it reads DTPDRKSYSLSPISPQSQDMLRQPQKPKR. Over residues 86-98 the composition is skewed to polar residues; it reads YSLSPISPQSQDM. 7 WD repeats span residues 123 to 160, 164 to 203, 206 to 246, 247 to 286, 289 to 331, 333 to 374, and 377 to 416; these read KNDF…VVQL, GATN…SVRS, GHSE…EMMK, VHEQ…PLHK, EHTA…LQNK, DTGS…NIAN, and AHTN…PKEE.

This sequence belongs to the WD repeat CDC20/Fizzy family. Interacts with mes1.

It localises to the nucleus. Functionally, meiosis-specific activator of the anaphase promoting complex/cyclosome (APC/C). Involved in cdc13 degradation. The protein is Meiotic fizzy-related protein 1 (mfr1) of Schizosaccharomyces pombe (strain 972 / ATCC 24843) (Fission yeast).